Here is a 238-residue protein sequence, read N- to C-terminus: Tetraspanin-4 (238 aa).

Topologically, residues 1–13 (MARACLQAVKYLM) are cytoplasmic. Residues 14–34 (FAFNLLFWLGGCGVLGVGIWL) traverse the membrane as a helical segment. The Extracellular portion of the chain corresponds to 35–55 (AATQGSFATLSSSFPSLSAAN). A helical membrane pass occupies residues 56–76 (LLIITGAFVMAIGFVGCLGAI). Over 77–85 (KENKCLLLT) the chain is Cytoplasmic. The helical transmembrane segment at 86 to 106 (FFLLLLLVFLLEATIAILFFA) threads the bilayer. Topologically, residues 107 to 201 (YTDKIDRYAQ…ETVKVWLQEN (95 aa)) are extracellular. Residues Asn-152 and Asn-161 are each glycosylated (N-linked (GlcNAc...) asparagine). The helical transmembrane segment at 202–222 (LLAVGIFGLCTALVQILGLTF) threads the bilayer. At 223 to 238 (AMTMYCQVVKADTYCA) the chain is on the cytoplasmic side.

This sequence belongs to the tetraspanin (TM4SF) family. Forms a complex with integrins. Interacts with HRH4. In terms of tissue distribution, expressed in multiple tissues but is absent in brain, lymphoid cells, and platelets.

The protein localises to the cell membrane. Functionally, structural component of specialized membrane microdomains known as tetraspanin-enriched microdomains (TERMs), which act as platforms for receptor clustering and signaling. Plays an essential role in migrasome formation and migration on retracting fibers at the rear end of migrating cells. Migrasomes are cellular organelles that form as large vesicle-like structures on retraction fibers of migrating cells. Mechanistically, acts as a membrane curvature sensor and participates in stabilizing the migrasome structure in a late stage of biogenesis. May also play a regulatory role for the histamine H4 receptor/HRH4 without affecting histamine binding to HRH4 or signaling. This Homo sapiens (Human) protein is Tetraspanin-4 (TSPAN4).